The sequence spans 482 residues: Glutamyl-tRNA(Gln) amidotransferase subunit A (482 aa).

Residues lysine 74 and serine 149 each act as charge relay system in the active site. Serine 173 serves as the catalytic Acyl-ester intermediate.

It belongs to the amidase family. GatA subfamily. As to quaternary structure, heterotrimer of A, B and C subunits.

It catalyses the reaction L-glutamyl-tRNA(Gln) + L-glutamine + ATP + H2O = L-glutaminyl-tRNA(Gln) + L-glutamate + ADP + phosphate + H(+). In terms of biological role, allows the formation of correctly charged Gln-tRNA(Gln) through the transamidation of misacylated Glu-tRNA(Gln) in organisms which lack glutaminyl-tRNA synthetase. The reaction takes place in the presence of glutamine and ATP through an activated gamma-phospho-Glu-tRNA(Gln). This is Glutamyl-tRNA(Gln) amidotransferase subunit A from Prochlorococcus marinus (strain AS9601).